A 357-amino-acid polypeptide reads, in one-letter code: Acyl-CoA Delta12-desaturase (357 aa).

2 helical membrane-spanning segments follow: residues 49–69 (VLWFVLLHAGALYGVYLIFAS) and 72–92 (IYTTLYGFLLCELSLLSITAG). Fe cation-binding residues include His94, His99, His131, His134, and His135. A Histidine box-1 motif is present at residues 94–99 (HRLWAH). The short motif at 131–135 (HRVHH) is the Histidine box-2 element. 2 helical membrane passes run 195–215 (LVPFVSFVIPTLIPMYFWGET) and 223–245 (STMFRYCLSLNLTWLVNSAAHMW). The Fe cation site is built by His243, His272, His275, and His276. A Histidine box-3 motif is present at residues 272–276 (HNFHH).

The protein belongs to the fatty acid desaturase type 1 family. It depends on Fe(2+) as a cofactor.

The protein resides in the membrane. It catalyses the reaction (9Z)-octadecenoyl-CoA + 2 Fe(II)-[cytochrome b5] + O2 + 2 H(+) = (9Z,12Z)-octadecadienoyl-CoA + 2 Fe(III)-[cytochrome b5] + 2 H2O. It carries out the reaction (9Z)-hexadecenoyl-CoA + 2 Fe(II)-[cytochrome b5] + O2 + 2 H(+) = (9Z,12Z)-hexadecadienoyl-CoA + 2 Fe(III)-[cytochrome b5] + 2 H2O. The enzyme catalyses hexadecanoyl-CoA + 2 Fe(II)-[cytochrome b5] + O2 + 2 H(+) = (9Z)-hexadecenoyl-CoA + 2 Fe(III)-[cytochrome b5] + 2 H2O. In terms of biological role, catalyzes the formation of a Delta12 double bond, acting on monounsaturated fatty acyl substrates like palmitoleoyl-CoA ((9Z)-hexadecenoyl-CoA) and oleoyl-CoA ((9Z)-octadecenoyl-CoA) with higher desaturation activity on (9Z)-octadecenoyl-CoA than (9Z)-hexadecenoyl-CoA. Requires preexisting cis double bond at the Delta9 position of fatty acyls to be able to insert the Delta12 double bond. Delta12-desaturation of (9Z)-octadecenoyl-CoA in insects produces (9Z,12Z)-octadecadienoyl-CoA (linoleoyl-CoA) which may be used to supply precursors of crucial mediators of immunity and reproduction and other essential functions. Can also catalyze Delta9-desaturation on saturated fatty acyl substrates like palmitoyl-CoA (hexadecanoyl-CoA) but with lower efficiency. This chain is Acyl-CoA Delta12-desaturase, found in Acheta domesticus (House cricket).